Consider the following 549-residue polypeptide: Cation/acetate symporter ActP (549 aa).

The next 13 membrane-spanning stretches (helical) occupy residues 33–53 (WQAI…TYWA), 77–97 (LAIA…ALVF), 103–123 (GLIY…LIAE), 148–168 (ILSA…QMVG), 183–203 (IAVV…GMLA), 206–226 (WVQI…AFMV), 262–282 (ISAL…PHIL), 303–323 (GFMG…IMLV), 355–375 (LFLG…VAGL), 404–424 (VSKI…FLFE), 428–448 (IAFM…PIIL), 464–484 (GGWL…TIWV), and 493–513 (IFPY…GIWF).

It belongs to the sodium:solute symporter (SSF) (TC 2.A.21) family.

The protein resides in the cell inner membrane. Functionally, transports acetate. The protein is Cation/acetate symporter ActP of Salmonella paratyphi C (strain RKS4594).